Here is a 227-residue protein sequence, read N- to C-terminus: UPF0758 protein CPE2144 (227 aa).

An MPN domain is found at 105–227; the sequence is KISKPSDVAK…FISLKEKDIL (123 aa). Residues histidine 176, histidine 178, and aspartate 189 each contribute to the Zn(2+) site. Residues 176 to 189 carry the JAMM motif motif; it reads HNHPSGDPTPSRDD.

The protein belongs to the UPF0758 family.

This Clostridium perfringens (strain 13 / Type A) protein is UPF0758 protein CPE2144.